We begin with the raw amino-acid sequence, 886 residues long: Linoleate 9S-lipoxygenase 5 (886 aa).

In terms of domain architecture, PLAT spans Ile35–Ser180. Positions Ala183 to Ile886 constitute a Lipoxygenase domain. The interval Gly234–Lys266 is disordered. 5 residues coordinate Fe cation: His542, His547, His733, Asn737, and Ile886.

Belongs to the lipoxygenase family. The cofactor is Fe cation. Expressed in roots.

It carries out the reaction (9Z,12Z)-octadecadienoate + O2 = (9S)-hydroperoxy-(10E,12Z)-octadecadienoate. It catalyses the reaction (9Z,12Z,15Z)-octadecatrienoate + O2 = (9S)-hydroperoxy-(10E,12Z,15Z)-octadecatrienoate. Its pathway is lipid metabolism; oxylipin biosynthesis. In terms of biological role, 9S-lipoxygenase that can use linoleic acid or linolenic acid as substrates. Plant lipoxygenases may be involved in a number of diverse aspects of plant physiology including growth and development, pest resistance, and senescence or responses to wounding. Catalyzes the hydroperoxidation of lipids containing a cis,cis-1,4-pentadiene structure. Function as regulators of root development by controlling the emergence of lateral roots. 9S-lypoxygenase-derived oxylipins may play an antagonistic role to ethylene signaling in the control of responses involving oxidative stress, lipid peroxidation and plant defense. LOX5-derived oxylipins may facilitate performance of green peach aphid (Myzus persicae) on foliage. 9S-lypoxygenase-derived oxylipins are engaged during infection to control the balance between salicylic acid (SA) and jasmonate (JA) signaling to facilitate infection by the fungal pathogen Fusarium graminearum. 9S-lypoxygenase-derived oxylipins activate brassinosteroid signaling to promote cell wall-based defense and limit pathogen infection. Does not seem to contribute to the oxidation of free fatty acids during seed aging. The protein is Linoleate 9S-lipoxygenase 5 of Arabidopsis thaliana (Mouse-ear cress).